The sequence spans 200 residues: Transcription elongation factor A protein-like 6 (200 aa).

A disordered region spans residues 1-200; it reads MEKPYNKNEG…QRGLHDIPYL (200 aa). Residues 20-36 show a composition bias toward acidic residues; it reads DEVEPDDEGKSDEEEKP. Ser30 is subject to Phosphoserine. Basic and acidic residues-rich tracts occupy residues 37 to 52, 60 to 80, and 115 to 154; these read DAEG…KAEG, LEDK…KPQG, and DRGT…EELR. The residue at position 65 (Ser65) is a Phosphoserine.

This sequence belongs to the TFS-II family. TFA subfamily.

Its subcellular location is the nucleus. Its function is as follows. May be involved in transcriptional regulation. This chain is Transcription elongation factor A protein-like 6 (TCEAL6), found in Homo sapiens (Human).